A 293-amino-acid chain; its full sequence is Protease HtpX homolog (293 aa).

2 helical membrane passes run 4–24 and 38–58; these read IFLF…TMRI and LTGL…ISLL. Histidine 146 is a Zn(2+) binding site. The active site involves glutamate 147. Histidine 150 serves as a coordination point for Zn(2+). 2 consecutive transmembrane segments (helical) span residues 161-181 and 198-218; these read LIQG…GYFV and ATVI…VAWF. Glutamate 223 lines the Zn(2+) pocket.

The protein belongs to the peptidase M48B family. Zn(2+) serves as cofactor.

It localises to the cell inner membrane. The chain is Protease HtpX homolog from Bordetella parapertussis (strain 12822 / ATCC BAA-587 / NCTC 13253).